The following is a 154-amino-acid chain: UPF0260 protein NTHI1811 (154 aa).

This sequence belongs to the UPF0260 family.

This Haemophilus influenzae (strain 86-028NP) protein is UPF0260 protein NTHI1811.